Reading from the N-terminus, the 313-residue chain is HTH-type transcriptional regulator CysB (313 aa).

An HTH lysR-type domain is found at 1-59 (MNLHQFRFVREAVRQNFNLTEAAKALYTSQPGVSKAIIELEDELGVEIFTRHGKRVRSL). Residues 19–38 (LTEAAKALYTSQPGVSKAII) constitute a DNA-binding region (H-T-H motif).

It belongs to the LysR transcriptional regulatory family.

Transcriptional regulator preferentially involved in the control of sulfate transport and reduction. Binds to DNA at target promoter regions. The sequence is that of HTH-type transcriptional regulator CysB from Burkholderia cenocepacia (strain ATCC BAA-245 / DSM 16553 / LMG 16656 / NCTC 13227 / J2315 / CF5610) (Burkholderia cepacia (strain J2315)).